A 310-amino-acid polypeptide reads, in one-letter code: Mitochondrial 2-oxodicarboxylate carrier 1 (310 aa).

The next 6 membrane-spanning stretches (helical) occupy residues Leu-9–Met-29, Ser-78–Ile-97, Ile-126–Val-146, Gly-179–Phe-199, Leu-219–Val-239, and Met-281–Phe-301. 3 Solcar repeats span residues Leu-9 to Phe-108, Met-120 to Leu-204, and Glu-213 to Phe-300.

The protein belongs to the mitochondrial carrier (TC 2.A.29) family.

The protein resides in the mitochondrion inner membrane. Functionally, transports C5-C7 oxodicarboxylates across the inner membranes of mitochondria. Can transport 2-oxoadipate, 2-oxoglutarate, adipate, glutarate, 2-oxopimelate, oxaloacetate, citrate and malate. The main physiological role is probably to supply 2-oxoadipate and 2-oxoglutarate from the mitochondrial matrix to the cytosol where they are used in the biosynthesis of lysine and glutamate, respectively, and in lysine catabolism. The sequence is that of Mitochondrial 2-oxodicarboxylate carrier 1 (ODC1) from Saccharomyces cerevisiae (strain ATCC 204508 / S288c) (Baker's yeast).